We begin with the raw amino-acid sequence, 283 residues long: 1D-myo-inositol 2-acetamido-2-deoxy-alpha-D-glucopyranoside deacetylase (283 aa).

Residues H15, D18, and H150 each contribute to the Zn(2+) site.

It belongs to the MshB deacetylase family. Zn(2+) is required as a cofactor.

It carries out the reaction 1D-myo-inositol 2-acetamido-2-deoxy-alpha-D-glucopyranoside + H2O = 1D-myo-inositol 2-amino-2-deoxy-alpha-D-glucopyranoside + acetate. In terms of biological role, catalyzes the deacetylation of 1D-myo-inositol 2-acetamido-2-deoxy-alpha-D-glucopyranoside (GlcNAc-Ins) in the mycothiol biosynthesis pathway. The protein is 1D-myo-inositol 2-acetamido-2-deoxy-alpha-D-glucopyranoside deacetylase of Actinosynnema mirum (strain ATCC 29888 / DSM 43827 / JCM 3225 / NBRC 14064 / NCIMB 13271 / NRRL B-12336 / IMRU 3971 / 101).